A 735-amino-acid chain; its full sequence is FHF complex subunit HOOK-interacting protein 2B (735 aa).

A disordered region spans residues 183-229 (SSSTSDEAAEKDCSGSSSPERASSPSSSSSACSLLSRSGAHPVSSPQ). A compositionally biased stretch (low complexity) spans 196–221 (SGSSSPERASSPSSSSSACSLLSRSG).

The protein belongs to the FHIP family.

The polypeptide is FHF complex subunit HOOK-interacting protein 2B (fhip2b) (Danio rerio (Zebrafish)).